A 298-amino-acid chain; its full sequence is Multifunctional dioxygenase ausE (298 aa).

Substrate contacts are provided by Arg-72 and Gln-127. The Fe cation site is built by His-130 and Asp-132. A substrate-binding site is contributed by Thr-167. Position 214 (His-214) interacts with Fe cation. Arg-226 contacts substrate.

This sequence belongs to the PhyH family. Homodimer. Fe cation serves as cofactor.

The catalysed reaction is preaustinoid A1 + 2-oxoglutarate + O2 = preaustinoid A2 + succinate + CO2 + H2O. The enzyme catalyses preaustinoid A2 + 2-oxoglutarate + O2 = preaustinoid A3 + succinate + CO2 + H2O. It carries out the reaction berkeleyone A + 2-oxoglutarate + O2 = preaustinoid A + succinate + CO2 + H2O. The protein operates within secondary metabolite biosynthesis; terpenoid biosynthesis. Multifunctional dioxygenase; part of the gene cluster that mediates the biosynthesis of calidodehydroaustin, a fungal meroterpenoid. The first step of the pathway is the synthesis of 3,5-dimethylorsellinic acid by the polyketide synthase ausA. 3,5-dimethylorsellinic acid is then prenylated by the polyprenyl transferase ausN. Further epoxidation by the FAD-dependent monooxygenase ausM and cyclization by the probable terpene cyclase ausL lead to the formation of protoaustinoid A. Protoaustinoid A is then oxidized to spiro-lactone preaustinoid A3 by the combined action of the FAD-binding monooxygenases ausB and ausC, and the dioxygenase ausE. Acid-catalyzed keto-rearrangement and ring contraction of the tetraketide portion of preaustinoid A3 by ausJ lead to the formation of preaustinoid A4. The aldo-keto reductase ausK, with the help of ausH, is involved in the next step by transforming preaustinoid A4 into isoaustinone which is in turn hydroxylated by the P450 monooxygenase ausI to form austinolide. The cytochrome P450 monooxygenase ausG modifies austinolide to austinol. Austinol is further acetylated to austin by the O-acetyltransferase ausP, which spontaneously changes to dehydroaustin. The cytochrome P450 monooxygenase ausR then converts dehydroaustin is into 7-dehydrodehydroaustin. The hydroxylation catalyzed by ausR permits the O-acetyltransferase ausQ to add an additional acetyl group to the molecule, leading to the formation of acetoxydehydroaustin. The short chain dehydrogenase ausT catalyzes the reduction of the double bond present between carbon atoms 1 and 2 to convert 7-dehydrodehydroaustin into 1,2-dihydro-7-hydroxydehydroaustin. AusQ catalyzes not only an acetylation reaction but also the addition of the PKS ausV diketide product to 1,2-dihydro-7-hydroxydehydroaustin, forming precalidodehydroaustin. Finally, the iron/alpha-ketoglutarate-dependent dioxygenase converts precalidodehydroaustin into calidodehydroaustin. The sequence is that of Multifunctional dioxygenase ausE from Aspergillus calidoustus.